The sequence spans 659 residues: Pentatricopeptide repeat-containing protein At3g26782, mitochondrial (659 aa).

Residues 1–24 (MKVRSKKALFCSVSRLLHTERHTE) constitute a mitochondrion transit peptide. 12 PPR repeats span residues 40–74 (DVFSWNSVIADLARSGDSAEALLAFSSMRKLSLYP), 75–109 (TRSSFPCAIKACSSLFDIFSGKQTHQQAFVFGYQS), 110–144 (DIFVSSALIVMYSTCGKLEDARKVFDEIPKRNIVS), 145–171 (WTSMIRGYDLNGNALDAVSLFKDLLVD), 182–216 (DSMGLVSVISACSRVPAKGLTESIHSFVIKRGFDR), 217–249 (GVSVGNTLLDAYAKGGEGGVAVARKIFDQIVDK), 250–284 (DRVSYNSIMSVYAQSGMSNEAFEVFRRLVKNKVVT), 286–320 (NAITLSTVLLAVSHSGALRIGKCIHDQVIRMGLED), 321–351 (DVIVGTSIIDMYCKCGRVETARKAFDRMKNK), 352–386 (NVRSWTAMIAGYGMHGHAAKALELFPAMIDSGVRP), 387–422 (NYITFVSVLAACSHAGLHVEGWRWFNAMKGRFGVEP), and 423–453 (GLEHYGCMVDLLGRAGFLQKAYDLIQRMKMK). Positions 458–533 (IWSSLLAACR…PPGFSLLELN (76 aa)) are type E motif. The type E(+) motif stretch occupies residues 534 to 564 (GEVHVFLIGDEEHPQREKIYEFLAELNRKLL). Positions 565-659 (EAGYVSNTSS…DGGCSCGDYW (95 aa)) are type DYW motif.

It belongs to the PPR family. PCMP-H subfamily.

The protein resides in the mitochondrion. The polypeptide is Pentatricopeptide repeat-containing protein At3g26782, mitochondrial (PCMP-H34) (Arabidopsis thaliana (Mouse-ear cress)).